Reading from the N-terminus, the 193-residue chain is Ion-translocating oxidoreductase complex subunit A (193 aa).

A run of 6 helical transmembrane segments spans residues 4 to 24 (FLLL…QFLG), 39 to 59 (IGMS…SYLV), 63 to 83 (ILLP…VIAV), 102 to 122 (LLGI…VALL), 134 to 154 (VIYG…FAAM), and 171 to 191 (SISM…TGLV).

It belongs to the NqrDE/RnfAE family. In terms of assembly, the complex is composed of six subunits: RnfA, RnfB, RnfC, RnfD, RnfE and RnfG.

Its subcellular location is the cell inner membrane. Part of a membrane-bound complex that couples electron transfer with translocation of ions across the membrane. The chain is Ion-translocating oxidoreductase complex subunit A from Pseudoalteromonas atlantica (strain T6c / ATCC BAA-1087).